We begin with the raw amino-acid sequence, 82 residues long: Sec-independent protein translocase protein TatA (82 aa).

Residues 1–21 (MGSLSIWHWLIVGAVVLLVFG) traverse the membrane as a helical segment. Residues 43-82 (GLSEDEEKAEAKPVGEPSLRSLDHQGAGDPLKTPDARKIG) form a disordered region.

The protein belongs to the TatA/E family. The Tat system comprises two distinct complexes: a TatABC complex, containing multiple copies of TatA, TatB and TatC subunits, and a separate TatA complex, containing only TatA subunits. Substrates initially bind to the TatABC complex, which probably triggers association of the separate TatA complex to form the active translocon.

It is found in the cell inner membrane. Part of the twin-arginine translocation (Tat) system that transports large folded proteins containing a characteristic twin-arginine motif in their signal peptide across membranes. TatA could form the protein-conducting channel of the Tat system. The chain is Sec-independent protein translocase protein TatA from Methylocella silvestris (strain DSM 15510 / CIP 108128 / LMG 27833 / NCIMB 13906 / BL2).